The primary structure comprises 1017 residues: Probable DNA ligase (1017 aa).

The interval 1–363 (MPWDVKFSHG…PACATPLHAP (363 aa)) is unknown. The interval 326–352 (GIRSSPPQVRAGDATPSSRSSGDAGVA) is disordered. The DNA ligase stretch occupies residues 364–1017 (DSFARFVAAA…GARPPPAASD (654 aa)). E667 serves as a coordination point for ATP. The active-site N6-AMP-lysine intermediate is K669. Residues R674, R689, E717, R860, and K866 each coordinate ATP.

It in the C-terminal section; belongs to the ATP-dependent DNA ligase family. The cofactor is Mg(2+).

It carries out the reaction ATP + (deoxyribonucleotide)n-3'-hydroxyl + 5'-phospho-(deoxyribonucleotide)m = (deoxyribonucleotide)n+m + AMP + diphosphate.. Its function is as follows. DNA ligase that seals nicks in double-stranded DNA during DNA replication, DNA recombination and DNA repair. The protein is Probable DNA ligase (lig) of Opitutus terrae (strain DSM 11246 / JCM 15787 / PB90-1).